Consider the following 109-residue polypeptide: Thiosulfate sulfurtransferase GlpE (109 aa).

The Rhodanese domain occupies 17–105 (KEGKTALVDI…WARSYPQDIT (89 aa)). The Cysteine persulfide intermediate role is filled by Cys65.

The protein belongs to the GlpE family.

Its subcellular location is the cytoplasm. It catalyses the reaction thiosulfate + hydrogen cyanide = thiocyanate + sulfite + 2 H(+). The enzyme catalyses thiosulfate + [thioredoxin]-dithiol = [thioredoxin]-disulfide + hydrogen sulfide + sulfite + 2 H(+). Functionally, transferase that catalyzes the transfer of sulfur from thiosulfate to thiophilic acceptors such as cyanide or dithiols. May function in a CysM-independent thiosulfate assimilation pathway by catalyzing the conversion of thiosulfate to sulfite, which can then be used for L-cysteine biosynthesis. This Yersinia pestis protein is Thiosulfate sulfurtransferase GlpE.